Reading from the N-terminus, the 513-residue chain is DNA damage response protein kinase DUN1 (513 aa).

Positions 1–12 are enriched in basic and acidic residues; the sequence is MSLSTKREHSGD. Residues 1–29 are disordered; it reads MSLSTKREHSGDVTDSSFKRQQRSNKPSS. Position 10 is a phosphoserine (S10). Residues 56–112 enclose the FHA domain; it reads TTIGRSRSCDVILSEPDISTFHAEFHLLQMDVDNFQRNLINVIDKSRNGTFINGNRL. The residue at position 139 (S139) is a Phosphoserine. The 281-residue stretch at 200–480 folds into the Protein kinase domain; it reads YLLGKELGAG…IDEALNHPWF (281 aa). ATP is bound by residues 206 to 214 and K229; that span reads LGAGHYALV. The active-site Proton acceptor is the D328. Position 380 is a phosphothreonine (T380).

Belongs to the protein kinase superfamily. CAMK Ser/Thr protein kinase family. CHEK2 subfamily. In terms of assembly, interacts with the PAB-dependent poly(A)-nuclease (PAN) complex regulatory subunit PAN3 via its forkhead-associated (FHA) domain. Autophosphorylation increases in response to DNA damage.

The protein resides in the nucleus. The enzyme catalyses L-seryl-[protein] + ATP = O-phospho-L-seryl-[protein] + ADP + H(+). It carries out the reaction L-threonyl-[protein] + ATP = O-phospho-L-threonyl-[protein] + ADP + H(+). Its function is as follows. Transducer of the DNA damage signal. Phosphorylates SML1 on serine residues. Cooperates with the PAN deadenylation complex in the regulation of RAD5 mRNA levels and cell survival in response to replicational stress. The protein is DNA damage response protein kinase DUN1 (DUN1) of Saccharomyces cerevisiae (strain ATCC 204508 / S288c) (Baker's yeast).